The sequence spans 1260 residues: Agglutinin-like protein 1 (1260 aa).

Positions 1 to 17 (MLQQFTLLFLYLSIASA) are cleaved as a signal peptide. 4 cysteine pairs are disulfide-bonded: Cys73-Cys150, Cys96-Cys112, Cys205-Cys298, and Cys227-Cys256. A run of 10 repeats spans residues 433 to 468 (SPNPTVSTTEYWSQSFATTTTVTAPPGGTDTVIIRE), 469 to 504 (PPNHTVTTTEYWSQSFATTTTVTAPPGGTDSVIIRE), 505 to 540 (PPNPTVTTTEYWSQSFATTTTVTAPPGGTDSVIIRE), 541 to 576 (PPNPTVTTTEYWSQSYATTTTVTAPPGGTDSVIIRE), 577 to 612 (PPNHTVTTTEYWSQSYATTTTVTAPPGGTDTVIIRE), 613 to 648 (PPNHTVTTTEYWSQSFATTTTVTGPPSGTDTVIIRE), 649 to 684 (PPNPTVTTTEYWSQSYATTTTITAPPGETDTVLIRE), 685 to 720 (PPNHTVTTTEYWSQSYATTTTVTAPPGETDTVLIRE), 721 to 756 (PPNHTVTTTEYWSQSYATTTTVTAPPGGTDTVIIRE), and 757 to 792 (PPNPTVTTTEYWSQSFATTTTVTAPPGGTDTVIIYE). The segment at 433 to 792 (SPNPTVSTTE…GGTDTVIIYE (360 aa)) is 10 X 36 AA tandem repeats. The N-linked (GlcNAc...) asparagine glycan is linked to Asn471. Residues Asn579 and Asn615 are each glycosylated (N-linked (GlcNAc...) asparagine). 2 N-linked (GlcNAc...) asparagine glycosylation sites follow: Asn687 and Asn723. N-linked (GlcNAc...) asparagine glycosylation is found at Asn820, Asn886, Asn918, and Asn973. Polar residues-rich tracts occupy residues 896 to 918 (PTASTMSDSLSSTDGISATSSDN) and 964 to 979 (KVTFTSNGDNQSGTHD). 2 disordered regions span residues 896–924 (PTASTMSDSLSSTDGISATSSDNVSKSGV) and 954–1226 (SIPS…SSSP). Low complexity predominate over residues 980–995 (SQSTSTEIEIVTTSST). One copy of the 2-1 repeat lies at 983-1043 (TSTEIEIVTT…TTSQPTGDNG (61 aa)). Positions 983–1152 (TSTEIEIVTT…ATTQATNENG (170 aa)) are 2 X 26 AA approximate repeats. Polar residues predominate over residues 1002–1062 (VSSNTDLTSE…PTVATSTLAS (61 aa)). N-linked (GlcNAc...) asparagine glycans are attached at residues Asn1045 and Asn1068. Over residues 1073 to 1090 (HESASTSLKPSMGENSGL) the composition is skewed to polar residues. Residues 1091-1110 (TTSTEIEATTTSPTEAPSPA) show a composition bias toward low complexity. One copy of the 2-2 repeat lies at 1092 to 1152 (TSTEIEATTT…ATTQATNENG (61 aa)). Polar residues predominate over residues 1111–1154 (VSSGTDVTTEPTDTREQPTTLSTTSKTNSESVATTQATNENGGK). Low complexity-rich tracts occupy residues 1155 to 1176 (SPSTDLTSSLTTGTSASTSANS) and 1197 to 1226 (SHSTSVTNSNSIVSNTPQTTLSQQVTSSSP).

Belongs to the ALS family. In terms of processing, N-glycosylated and O-glycosylated. Post-translationally, the GPI-anchor is attached to the protein in the endoplasmic reticulum and serves to target the protein to the cell surface. There, the glucosamine-inositol phospholipid moiety is cleaved off and the GPI-modified mannoprotein is covalently attached via its lipidless GPI glycan remnant to the 1,6-beta-glucan of the outer cell wall layer.

It is found in the cell membrane. The protein resides in the secreted. Its subcellular location is the cell wall. Its function is as follows. Major cell surface adhesion protein which mediates both yeast-to-host tissue adherence and yeast aggregation. Acts as a downstream effector of the EFG1 regulatory pathway. Required for rapamycin-induced aggregation of C.albicans. Binds glycans and mediates adherence to endothelial and epithelial cells, thereby playing an important role in the pathogenesis of C.albicans infections. This chain is Agglutinin-like protein 1 (ALS1), found in Candida albicans (Yeast).